The following is a 471-amino-acid chain: Putative multidrug resistance protein MdtD (471 aa).

The Periplasmic segment spans residues 1–11 (MTELPDSTRWQ). Residues 12-32 (LWIVAFGFFMQSLDTTIVNTA) form a helical membrane-spanning segment. The Cytoplasmic segment spans residues 33-48 (LPSMAQSLGESPLHMH). A helical membrane pass occupies residues 49–69 (MVIVSYVLTVAVMLPASGWLA). The Periplasmic segment spans residues 70–76 (DKVGVRN). The helical transmembrane segment at 77–97 (IFFTAIVLFTLGSLFCALSGT) threads the bilayer. The Cytoplasmic segment spans residues 98 to 101 (LNEL). A helical transmembrane segment spans residues 102–124 (LLARALQGVGGAMMVPVGRLTVM). The Periplasmic segment spans residues 125 to 137 (KIVPREQYMAAMT). The chain crosses the membrane as a helical span at residues 138 to 158 (FVTLPGQVGPLLGPALGGLLV). Over 159 to 164 (EYASWH) the chain is Cytoplasmic. A helical membrane pass occupies residues 165–185 (WIFLINIPVGIIGAIATLLLM). Residues 186–196 (PNYTMQTRRFD) are Periplasmic-facing. Residues 197–217 (LSGFLLLAVGMAVLTLALDGS) form a helical membrane-spanning segment. Residues 218 to 224 (KGTGLSP) lie on the Cytoplasmic side of the membrane. A helical transmembrane segment spans residues 225–245 (LAIAGLVAVGVVALVLYLLHA). Topologically, residues 246–262 (RNNNRALFSLKLFRTRT) are periplasmic. The chain crosses the membrane as a helical span at residues 263–283 (FSLGLAGSFAGRIGSGMLPFM). Over 284 to 285 (TP) the chain is Cytoplasmic. A helical membrane pass occupies residues 286-306 (VFLQIGLGFSPFHAGLMMIPM). The Periplasmic segment spans residues 307 to 341 (VLGSMGMKRIVVQVVNRFGYRRVLVATTLGLSLIT). A helical membrane pass occupies residues 342 to 362 (LLFMTTALLGWYYVLPFVLFL). The Cytoplasmic segment spans residues 363 to 395 (QGMVNSTRFSSMNTLTLKDLPDNLASSGNSLLS). Residues 396–416 (MIMQLSMSIGVTIAGLLLGLF) traverse the membrane as a helical segment. The Periplasmic portion of the chain corresponds to 417–430 (GSQHVSVDSGTTQT). Residues 431-451 (VFMYTWLSMAFIIALPAFIFA) traverse the membrane as a helical segment. Over 452–471 (RVPNDTHQNVAISRRKRSAQ) the chain is Cytoplasmic.

It belongs to the major facilitator superfamily. TCR/Tet family.

It localises to the cell inner membrane. The protein is Putative multidrug resistance protein MdtD of Shigella sonnei (strain Ss046).